A 643-amino-acid chain; its full sequence is Probable extracellular metalloproteinase 4 (643 aa).

The first 18 residues, 1 to 18, serve as a signal peptide directing secretion; it reads MHGLLLAGLLALPLNVLA. The propeptide occupies 19–254; that stretch reads HPTESHSSGV…VHSVVDYVSA (236 aa). Over residues 47 to 57 the composition is skewed to basic and acidic residues; the sequence is TKSDAVPKQDG. Residues 47–69 form a disordered region; that stretch reads TKSDAVPKQDGESFTTSSTGDDN. Over residues 58–69 the composition is skewed to polar residues; the sequence is ESFTTSSTGDDN. Residues N271 and N420 are each glycosylated (N-linked (GlcNAc...) asparagine). Residue H437 coordinates Zn(2+). E438 is an active-site residue. H441 is a Zn(2+) binding site. N-linked (GlcNAc...) asparagine glycosylation is found at N603 and N629.

Belongs to the peptidase M36 family. Zn(2+) is required as a cofactor.

The protein resides in the secreted. Secreted metalloproteinase probably acting as a virulence factor. The polypeptide is Probable extracellular metalloproteinase 4 (MEP4) (Arthroderma benhamiae (strain ATCC MYA-4681 / CBS 112371) (Trichophyton mentagrophytes)).